A 260-amino-acid chain; its full sequence is Uroplakin-1b (260 aa).

At 1–15 the chain is on the cytoplasmic side; the sequence is MAKDDSTVRCFQGLL. A helical membrane pass occupies residues 16-36; that stretch reads IFGHVIVGMCGIALTAECIFF. Over 37 to 59 the chain is Extracellular; it reads VSDQHSLYPLLEATNNDDIFGAA. The helical transmembrane segment at 60 to 80 threads the bilayer; the sequence is WIGMFVGICLFCLSVLAIVGI. Topologically, residues 81-86 are cytoplasmic; sequence MKSNRK. The helical transmembrane segment at 87–107 threads the bilayer; the sequence is ILLAYFIMMFIVYGFEVASCI. The Extracellular portion of the chain corresponds to 108–229; sequence TAATQRDFFT…ELISGPMDRH (122 aa). A helical transmembrane segment spans residues 230–250; the sequence is AWGVAWFGFAILCWTFWVLLG. The Cytoplasmic segment spans residues 251–260; it reads TMFYWSRIEY.

Belongs to the tetraspanin (TM4SF) family. Heterodimer with uroplakin-3A (UPK3A) or uroplakin-3B (UPK3B). In terms of processing, N-glycosylated with high-mannose oligosaccharides. In terms of tissue distribution, bladder epithelium.

The protein resides in the membrane. Component of the asymmetric unit membrane (AUM); a highly specialized biomembrane elaborated by terminally differentiated urothelial cells. May play an important role in normal bladder epithelial physiology, possibly in regulating membrane permeability of superficial umbrella cells or in stabilizing the apical membrane through AUM/cytoskeletal interactions. The protein is Uroplakin-1b (Upk1b) of Mus musculus (Mouse).